The primary structure comprises 354 residues: Putative Xaa-Pro aminopeptidase (354 aa).

Residues D213, D224, H290, E319, and E333 each contribute to the Mn(2+) site.

This sequence belongs to the peptidase M24B family. Requires Mn(2+) as cofactor.

It catalyses the reaction Release of any N-terminal amino acid, including proline, that is linked to proline, even from a dipeptide or tripeptide.. The sequence is that of Putative Xaa-Pro aminopeptidase (pepP) from Mycoplasma pneumoniae (strain ATCC 29342 / M129 / Subtype 1) (Mycoplasmoides pneumoniae).